Consider the following 316-residue polypeptide: Phosducin-like protein 1 (316 aa).

Residues 1–61 (MEQNILNSIL…EDGDKEYEVD (61 aa)) form a disordered region. A compositionally biased stretch (basic and acidic residues) spans 12–41 (KFGDGDQERSDIRHNDSGDENDNHSDHEGN). Residues 49 to 61 (EGNEDGDKEYEVD) show a composition bias toward acidic residues. One can recognise a Phosducin domain in the interval 95–290 (SDYAEHREKQ…LLSSYDIIPN (196 aa)). Residues 102–156 (EKQKQKYLQKKYETQKMLEKMCFTTRDQPPPTEEENQLDSDDDDLERIRKARMEQ) adopt a coiled-coil conformation. A thioredoxin fold region spans residues 175 to 316 (FGYFKQIDSS…RPESDDDNDD (142 aa)). The interval 293 to 316 (KAKNSNWETSLSRKRPESDDDNDD) is disordered.

It belongs to the phosducin family.

The protein resides in the cytoplasm. Its function is as follows. Required for normal chemotaxis in response to cAMP and folate. Required for the heterodimerization of the G protein beta and gamma subunits gpbA and gpgA, which is itself thought to be necessary for prenylation of the gamma subunit gpgA and its association with plasma membranes. This chain is Phosducin-like protein 1 (phlp1), found in Dictyostelium discoideum (Social amoeba).